Consider the following 218-residue polypeptide: MKIFLDTANLEEIKKGVEWGIVDGVTTNPTLISKEGAEFKQRVKEICDLVKGPVSAEVVSLDYEGMVREARELAQLSEYVVIKIPMTPDGIRAVKTLSAEGIKTNVTLVFSPAQAILAAKAGATYVSPFIGRMDDLSNDGMRMLGEIVEIYDNYGFETEIIAASIRHPMHVVEAALMGVDIVTMPFAVLEKLFKHPMTDLGIERFMNDWKKYLENLKK.

Lys83 acts as the Schiff-base intermediate with substrate in catalysis.

Belongs to the transaldolase family. Type 3B subfamily.

It is found in the cytoplasm. The enzyme catalyses D-sedoheptulose 7-phosphate + D-glyceraldehyde 3-phosphate = D-erythrose 4-phosphate + beta-D-fructose 6-phosphate. The protein operates within carbohydrate degradation; pentose phosphate pathway; D-glyceraldehyde 3-phosphate and beta-D-fructose 6-phosphate from D-ribose 5-phosphate and D-xylulose 5-phosphate (non-oxidative stage): step 2/3. Its function is as follows. Transaldolase is important for the balance of metabolites in the pentose-phosphate pathway. This Thermotoga petrophila (strain ATCC BAA-488 / DSM 13995 / JCM 10881 / RKU-1) protein is Probable transaldolase.